We begin with the raw amino-acid sequence, 314 residues long: Oxidoreductase NAD-binding domain-containing protein 1 (314 aa).

An N-terminal signal peptide occupies residues 1 to 18; the sequence is MALVAGSAAYQVLRGVTG. Positions 63 to 166 constitute an FAD-binding FR-type domain; sequence EIISPAKVCG…VGGEFCFDPQ (104 aa). NAD(+) is bound at residue 180–185; the sequence is GVGINP.

The polypeptide is Oxidoreductase NAD-binding domain-containing protein 1 (oxnad1) (Xenopus laevis (African clawed frog)).